The sequence spans 165 residues: Dihydrofolate reductase type A13 (165 aa).

Residues Arg7–Arg162 enclose the DHFR domain.

The protein belongs to the dihydrofolate reductase family. Homodimer.

It carries out the reaction (6S)-5,6,7,8-tetrahydrofolate + NADP(+) = 7,8-dihydrofolate + NADPH + H(+). Its pathway is cofactor biosynthesis; tetrahydrofolate biosynthesis; 5,6,7,8-tetrahydrofolate from 7,8-dihydrofolate: step 1/1. In terms of biological role, key enzyme in folate metabolism. Catalyzes an essential reaction for de novo glycine and purine synthesis, and for DNA precursor synthesis. This is Dihydrofolate reductase type A13 (dfrA13) from Escherichia coli.